Here is a 424-residue protein sequence, read N- to C-terminus: MLFERARGVFPGGVNSPARALKHLAAPLVAKGASGPYLYTDRGRLVDYCMAFGAIILGHAHPRVKNAVTQQLERGWIYALLTEEEVAYAERIKAHVPSIEKMRIVNSGTEATMNAVRLARGYTRRDVIIKFDGNFHGSHDYVLVKAGSGAATWGIPTSAGVPQDVIKLTAVVPYNDVDAFVKTVREIGGRLAAVIVEPIAANYGLIIPDREFIKALKEETERVGALLIFDEVVTGFRVGLSGAQGHFGVRPDLTTLGKVVGGGFPIGIFGGRADVMDMVAPSGPVYNAGTYNAHPVSVAAGLAVIEELEKGEPYKIANEAAERLAKGIEDIAGRAGFDVVVKQIASMFQLYFKRGDVKTPQDVRESDEKLYLKLHELAIKHGVYLAPSQYETNFTSAAHTQDVVETTLAALEKAFTELKSQVGK.

Lysine 258 is modified (N6-(pyridoxal phosphate)lysine).

The protein belongs to the class-III pyridoxal-phosphate-dependent aminotransferase family. HemL subfamily. The cofactor is pyridoxal 5'-phosphate.

It localises to the cytoplasm. The enzyme catalyses (S)-4-amino-5-oxopentanoate = 5-aminolevulinate. It functions in the pathway porphyrin-containing compound metabolism; protoporphyrin-IX biosynthesis; 5-aminolevulinate from L-glutamyl-tRNA(Glu): step 2/2. This is Glutamate-1-semialdehyde 2,1-aminomutase from Pyrobaculum islandicum (strain DSM 4184 / JCM 9189 / GEO3).